Reading from the N-terminus, the 318-residue chain is Aspartate carbamoyltransferase catalytic subunit (318 aa).

Carbamoyl phosphate contacts are provided by Arg-62 and Thr-63. Lys-90 contributes to the L-aspartate binding site. Carbamoyl phosphate is bound by residues Arg-112, His-140, and Gln-143. Residues Arg-173 and Arg-227 each contribute to the L-aspartate site. 2 residues coordinate carbamoyl phosphate: Gly-268 and Pro-269.

The protein belongs to the aspartate/ornithine carbamoyltransferase superfamily. ATCase family. As to quaternary structure, heterododecamer (2C3:3R2) of six catalytic PyrB chains organized as two trimers (C3), and six regulatory PyrI chains organized as three dimers (R2).

It carries out the reaction carbamoyl phosphate + L-aspartate = N-carbamoyl-L-aspartate + phosphate + H(+). The protein operates within pyrimidine metabolism; UMP biosynthesis via de novo pathway; (S)-dihydroorotate from bicarbonate: step 2/3. In terms of biological role, catalyzes the condensation of carbamoyl phosphate and aspartate to form carbamoyl aspartate and inorganic phosphate, the committed step in the de novo pyrimidine nucleotide biosynthesis pathway. The sequence is that of Aspartate carbamoyltransferase catalytic subunit from Desulfotalea psychrophila (strain LSv54 / DSM 12343).